Reading from the N-terminus, the 324-residue chain is Probable RuBisCO transcriptional regulator (324 aa).

An HTH lysR-type domain is found at phenylalanine 8–threonine 65. Positions phenylalanine 25–glutamine 44 form a DNA-binding region, H-T-H motif.

The protein belongs to the LysR transcriptional regulatory family.

Its subcellular location is the plastid. The protein localises to the cyanelle. Functionally, trans-acting transcriptional regulator of RuBisCO genes (rbcL and rbcS) expression. In Cyanophora paradoxa, this protein is Probable RuBisCO transcriptional regulator (rbcR).